A 2812-amino-acid polypeptide reads, in one-letter code: Zonadhesin (2812 aa).

The first 17 residues, 1–17 (MVPPVWTLLLLVGAALF), serve as a signal peptide directing secretion. Residues 18–2757 (RKEKPPDQKL…DAPPPRKPAS (2740 aa)) are Extracellular-facing. 3 MAM domains span residues 39–204 (TQCD…SCNR), 209–368 (QTCS…PCGE), and 371–536 (PQCD…TCPV). Residues 61–84 (EDWVRASGPSPTGSTGAPGGYPNG) form a disordered region. The span at 66 to 75 (ASGPSPTGST) shows a compositional bias: low complexity. Residues Asn-333 and Asn-493 are each glycosylated (N-linked (GlcNAc...) asparagine). Disordered stretches follow at residues 545–884 (VSPV…PTEK) and 904–929 (EKPTISPEKPTISTEKPTIPTEKPTI). A compositionally biased stretch (low complexity) spans 547-558 (PVSSTGPSETTG). Residues 559–570 (LTENPTISTKKP) show a composition bias toward polar residues. The interval 573–1041 (SIEKPSVTTE…GTTTTSRSST (469 aa)) is 66 X heptapeptide repeats (approximate) (mucin-like domain). Composition is skewed to low complexity over residues 592–603 (TIPTEKPTISTE), 651–675 (TEKPTVPTEEPTTPTEETTTSMEEP), 713–842 (SPEK…STEK), 853–868 (STEKPTIPTEKPTISP), and 916–929 (STEKPTIPTEKPTI). Residues 1044–1093 (CPPNARYESCACPASCKSPRPSCGPLCREGCVCNPGFLFSDNHCIQASSC) form the TIL 1 domain. A VWFC 1 domain is found at 1103–1148 (EPGAEWFSPNCTEHCRCWPGSRVECQISQCGTHTVCQLKNGQYGCH). 2 N-linked (GlcNAc...) asparagine glycosylation sites follow: Asn-1112 and Asn-1188. Positions 1154 to 1331 (ATCLVYGDPH…TDQDEDQECQ (178 aa)) constitute a VWFD 1 domain. Cystine bridges form between Cys-1156–Cys-1291 and Cys-1178–Cys-1330. The span at 1302–1316 (HLKLDGSPAGDKEEL) shows a compositional bias: basic and acidic residues. Residues 1302–1323 (HLKLDGSPAGDKEELGNSWQTD) are disordered. The TIL 2 domain occupies 1426 to 1479 (CPPNSKYSLCAKPCPDTCHSGFSGMFCSDRCVEACECNPGFVLSGLECIPRSQC). The VWFC 2 domain maps to 1480-1535 (GCLHPAGSYFKVGERWYKPGCKELCVCESNNRIRCQPWRCRAQEFCGQQDGIYGCH). The 181-residue stretch at 1540–1720 (ATCTASGDPH…LPESSEPGCF (181 aa)) folds into the VWFD 2 domain. Disulfide bonds link Cys-1542–Cys-1680 and Cys-1564–Cys-1719. N-linked (GlcNAc...) asparagine glycans are attached at residues Asn-1685 and Asn-1804. The region spanning 1812-1867 (CPPGSSYSPCSSPCPDTCSSINNPRDCPKALPCAESCECQKGHILSGTSCVPLGQC) is the TIL 3 domain. The region spanning 1868-1924 (GCTDPAGSYHPVGERWYTENTCTRLCTCSVHNNITCFQSTCKPNQICWALDGLLHCR) is the VWFC 3 domain. N-linked (GlcNAc...) asparagine glycosylation is found at Asn-1900 and Asn-1946. The 180-residue stretch at 1929–2108 (GVCQLPGESH…KDKDIDPSCQ (180 aa)) folds into the VWFD 3 domain. 2 disulfides stabilise this stretch: Cys-1931–Cys-2069 and Cys-1953–Cys-2107. N-linked (GlcNAc...) asparagine glycosylation is present at Asn-2203. Residues 2211–2267 (CPAYSSYTNCLPSCSPSCWDLDGRCEGAKVPSACAEGCICQPGYVLSEDKCVPRSQC) form the TIL 4 domain. In terms of domain architecture, VWFC 4 spans 2268–2329 (GCKDAHGGSI…NSNCVSDKSE (62 aa)). Residues 2329-2505 (EQCSVYGDPR…SWEVKTEDAL (177 aa)) enclose the VWFD 4 domain. A disulfide bridge connects residues Cys-2331 and Cys-2468. N-linked (GlcNAc...) asparagine glycans are attached at residues Asn-2542 and Asn-2701. The VWFC 5 domain maps to 2652 to 2797 (CGCTSNGIYY…KREKTQEGDR (146 aa)). Residues 2708–2744 (PESPCLQNPCQNDGQCREQGATFTCECEVGYGGGLCM) enclose the EGF-like domain. 3 cysteine pairs are disulfide-bonded: Cys-2712–Cys-2723, Cys-2717–Cys-2732, and Cys-2734–Cys-2743. The helical transmembrane segment at 2758–2778 (NLVGVLLGLLVPVVVVLLAVT) threads the bilayer. At 2779–2812 (RECIYRTRRKREKTQEGDRLARLVDTDTVLDCAC) the chain is on the cytoplasmic side.

In terms of assembly, probably forms covalent oligomers. In terms of tissue distribution, in testis, primarily in haploid spermatids.

The protein resides in the cell membrane. In terms of biological role, binds in a species-specific manner to the zona pellucida of the egg. May be involved in gamete recognition and/or signaling. The protein is Zonadhesin (ZAN) of Homo sapiens (Human).